We begin with the raw amino-acid sequence, 134 residues long: ATP synthase epsilon chain (134 aa).

This sequence belongs to the ATPase epsilon chain family. F-type ATPases have 2 components, CF(1) - the catalytic core - and CF(0) - the membrane proton channel. CF(1) has five subunits: alpha(3), beta(3), gamma(1), delta(1), epsilon(1). CF(0) has three main subunits: a, b and c.

Its subcellular location is the cell inner membrane. Functionally, produces ATP from ADP in the presence of a proton gradient across the membrane. This chain is ATP synthase epsilon chain, found in Sinorhizobium medicae (strain WSM419) (Ensifer medicae).